A 175-amino-acid polypeptide reads, in one-letter code: ATP synthase subunit delta (175 aa).

It belongs to the ATPase delta chain family. F-type ATPases have 2 components, F(1) - the catalytic core - and F(0) - the membrane proton channel. F(1) has five subunits: alpha(3), beta(3), gamma(1), delta(1), epsilon(1). F(0) has three main subunits: a(1), b(2) and c(10-14). The alpha and beta chains form an alternating ring which encloses part of the gamma chain. F(1) is attached to F(0) by a central stalk formed by the gamma and epsilon chains, while a peripheral stalk is formed by the delta and b chains.

Its subcellular location is the cell inner membrane. F(1)F(0) ATP synthase produces ATP from ADP in the presence of a proton or sodium gradient. F-type ATPases consist of two structural domains, F(1) containing the extramembraneous catalytic core and F(0) containing the membrane proton channel, linked together by a central stalk and a peripheral stalk. During catalysis, ATP synthesis in the catalytic domain of F(1) is coupled via a rotary mechanism of the central stalk subunits to proton translocation. Its function is as follows. This protein is part of the stalk that links CF(0) to CF(1). It either transmits conformational changes from CF(0) to CF(1) or is implicated in proton conduction. In Stenotrophomonas maltophilia (strain R551-3), this protein is ATP synthase subunit delta.